A 121-amino-acid chain; its full sequence is Large ribosomal subunit protein bL20 (121 aa).

Belongs to the bacterial ribosomal protein bL20 family.

In terms of biological role, binds directly to 23S ribosomal RNA and is necessary for the in vitro assembly process of the 50S ribosomal subunit. It is not involved in the protein synthesizing functions of that subunit. This is Large ribosomal subunit protein bL20 from Sphingopyxis alaskensis (strain DSM 13593 / LMG 18877 / RB2256) (Sphingomonas alaskensis).